Consider the following 436-residue polypeptide: Xylose isomerase (436 aa).

Active-site residues include His100 and Asp103. Mg(2+) is bound by residues Glu231, Glu267, His270, Asp295, Asp306, Asp308, and Asp338.

This sequence belongs to the xylose isomerase family. In terms of assembly, homotetramer. Mg(2+) is required as a cofactor.

The protein resides in the cytoplasm. It catalyses the reaction alpha-D-xylose = alpha-D-xylulofuranose. The polypeptide is Xylose isomerase (Agrobacterium fabrum (strain C58 / ATCC 33970) (Agrobacterium tumefaciens (strain C58))).